Reading from the N-terminus, the 468-residue chain is Nuclear receptor ROR-alpha A (468 aa).

Positions 15-90 (IIPCKICGDK…VGMSRDAVKF (76 aa)) form a DNA-binding region, nuclear receptor. 2 NR C4-type zinc fingers span residues 18–38 (CKICGDKSSGIHYGVITCEGC) and 54–73 (CPRQKNCLIDRTSRNRCQHC). Disordered stretches follow at residues 101–129 (LYAEVQKHRLQQQQRDHQQQPGEAEPLTP) and 142–163 (HDDLSGYMNGHTPDGTKPDSGV). The NR LBD domain maps to 217-455 (ELEHLAQNIS…AHFPPLYKEL (239 aa)). Positions 444–455 (VRAHFPPLYKEL) are AF-2.

Belongs to the nuclear hormone receptor family. NR1 subfamily. In terms of tissue distribution, expressed in the brain, in cerebellar-like structures, including Purkinje cells.

The protein localises to the nucleus. Functionally, nuclear receptor that binds DNA as a monomer to ROR response elements (RORE). Required for proper cerebellum development. This is Nuclear receptor ROR-alpha A (roraa) from Danio rerio (Zebrafish).